The following is a 326-amino-acid chain: Glycerol-3-phosphate dehydrogenase [NAD(P)+] (326 aa).

Residues Ser10, Phe11, Arg31, and Lys108 each coordinate NADPH. Lys108, Gly136, and Ser138 together coordinate sn-glycerol 3-phosphate. Ala140 serves as a coordination point for NADPH. Sn-glycerol 3-phosphate is bound by residues Lys191, Asp246, Ser256, Arg257, and Asn258. Lys191 acts as the Proton acceptor in catalysis. Arg257 is a binding site for NADPH. Residues Ile281 and Glu283 each coordinate NADPH.

This sequence belongs to the NAD-dependent glycerol-3-phosphate dehydrogenase family.

The protein localises to the cytoplasm. The enzyme catalyses sn-glycerol 3-phosphate + NAD(+) = dihydroxyacetone phosphate + NADH + H(+). The catalysed reaction is sn-glycerol 3-phosphate + NADP(+) = dihydroxyacetone phosphate + NADPH + H(+). It functions in the pathway membrane lipid metabolism; glycerophospholipid metabolism. Its function is as follows. Catalyzes the reduction of the glycolytic intermediate dihydroxyacetone phosphate (DHAP) to sn-glycerol 3-phosphate (G3P), the key precursor for phospholipid synthesis. The chain is Glycerol-3-phosphate dehydrogenase [NAD(P)+] from Ehrlichia chaffeensis (strain ATCC CRL-10679 / Arkansas).